The following is a 385-amino-acid chain: 3-hydroxyisobutyryl-CoA hydrolase, mitochondrial (385 aa).

The substrate site is built by E120, G145, E168, and D176.

The protein belongs to the enoyl-CoA hydratase/isomerase family.

It localises to the mitochondrion. It carries out the reaction 3-hydroxy-2-methylpropanoyl-CoA + H2O = 3-hydroxy-2-methylpropanoate + CoA + H(+). It participates in amino-acid degradation; L-valine degradation. Hydrolyzes 3-hydroxyisobutyryl-CoA (HIBYL-CoA), a saline catabolite. Has high activity toward isobutyryl-CoA. Could be an isobutyryl-CoA dehydrogenase that functions in valine catabolism. Also hydrolyzes 3-hydroxypropanoyl-CoA. This Xenopus laevis (African clawed frog) protein is 3-hydroxyisobutyryl-CoA hydrolase, mitochondrial (hibch).